The chain runs to 73 residues: UPF0270 protein SG2298 (73 aa).

The protein belongs to the UPF0270 family.

This is UPF0270 protein SG2298 from Sodalis glossinidius (strain morsitans).